The primary structure comprises 292 residues: MTSASELRSGKTHRDENFPVASWIIHPRHRDLILAFYNFVRTADDIADHEMLDGDTKLEYLDLLEAELLGRGETQPEAVHLRRALAERGMPPRHALDLLTAFRMDVTKLRYEDWDEVIHYCRYSAMPVGRFMLDVHGESTTTWQASDALCAGLQINNHLQDCGKDYRTLNRVYLPRDVLDAAGAKVEDLGLQKSSPALLKCLQGLAVRTASLLGDGRPLAAEIKDYRLGLEVSVIQAYADRIVRMLQTRDPLSERVHLKPIEFVIASFGAMSSEIVRRSFGKGPVSHPAPRA.

Belongs to the phytoene/squalene synthase family. HpnC subfamily.

It catalyses the reaction presqualene diphosphate + H2O = hydroxysqualene + diphosphate. The protein operates within secondary metabolite biosynthesis; hopanoid biosynthesis. Functionally, involved in the biosynthesis of the hopanoid precursor squalene (SQ) from farnesyl diphosphate (FPP). Catalyzes the second step, the conversion of presqualene diphosphate (PSPP) to hydroxysqualene (HSQ). The protein is Hydroxysqualene synthase of Rhodopseudomonas palustris (strain ATCC BAA-98 / CGA009).